The following is a 98-amino-acid chain: NADH-ubiquinone oxidoreductase chain 4L (98 aa).

Helical transmembrane passes span 1 to 21 (MSLT…GLLM), 29 to 49 (SLLC…VTIL), and 61 to 81 (IILL…LVMV).

The protein belongs to the complex I subunit 4L family. In terms of assembly, core subunit of respiratory chain NADH dehydrogenase (Complex I) which is composed of 45 different subunits.

The protein localises to the mitochondrion inner membrane. It carries out the reaction a ubiquinone + NADH + 5 H(+)(in) = a ubiquinol + NAD(+) + 4 H(+)(out). In terms of biological role, core subunit of the mitochondrial membrane respiratory chain NADH dehydrogenase (Complex I) which catalyzes electron transfer from NADH through the respiratory chain, using ubiquinone as an electron acceptor. Part of the enzyme membrane arm which is embedded in the lipid bilayer and involved in proton translocation. This is NADH-ubiquinone oxidoreductase chain 4L (MT-ND4L) from Sturnira lilium (Lesser yellow-shouldered bat).